A 223-amino-acid polypeptide reads, in one-letter code: Ribonuclease HII (223 aa).

One can recognise an RNase H type-2 domain in the interval 32–223 (FHIAGVDEVG…LKGRFRDNMS (192 aa)). The a divalent metal cation site is built by Asp-38, Glu-39, and Asp-130.

Belongs to the RNase HII family. Requires Mn(2+) as cofactor. The cofactor is Mg(2+).

The protein localises to the cytoplasm. It carries out the reaction Endonucleolytic cleavage to 5'-phosphomonoester.. Its function is as follows. Endonuclease that specifically degrades the RNA of RNA-DNA hybrids. This chain is Ribonuclease HII, found in Bartonella quintana (strain Toulouse) (Rochalimaea quintana).